A 142-amino-acid chain; its full sequence is Transcription antitermination protein NusB (142 aa).

This sequence belongs to the NusB family.

In terms of biological role, involved in transcription antitermination. Required for transcription of ribosomal RNA (rRNA) genes. Binds specifically to the boxA antiterminator sequence of the ribosomal RNA (rrn) operons. In Thermotoga sp. (strain RQ2), this protein is Transcription antitermination protein NusB.